The sequence spans 257 residues: Imidazole glycerol phosphate synthase subunit HisF (257 aa).

Active-site residues include Asp-11 and Asp-130.

Belongs to the HisA/HisF family. Heterodimer of HisH and HisF.

It localises to the cytoplasm. The catalysed reaction is 5-[(5-phospho-1-deoxy-D-ribulos-1-ylimino)methylamino]-1-(5-phospho-beta-D-ribosyl)imidazole-4-carboxamide + L-glutamine = D-erythro-1-(imidazol-4-yl)glycerol 3-phosphate + 5-amino-1-(5-phospho-beta-D-ribosyl)imidazole-4-carboxamide + L-glutamate + H(+). The protein operates within amino-acid biosynthesis; L-histidine biosynthesis; L-histidine from 5-phospho-alpha-D-ribose 1-diphosphate: step 5/9. In terms of biological role, IGPS catalyzes the conversion of PRFAR and glutamine to IGP, AICAR and glutamate. The HisF subunit catalyzes the cyclization activity that produces IGP and AICAR from PRFAR using the ammonia provided by the HisH subunit. The sequence is that of Imidazole glycerol phosphate synthase subunit HisF from Shewanella halifaxensis (strain HAW-EB4).